The chain runs to 586 residues: NudC domain-containing protein 1 (586 aa).

The 90-residue stretch at 275–364 folds into the CS domain; the sequence is KREPLYNWQQ…EPGCTWAELV (90 aa).

The protein localises to the cytoplasm. It is found in the nucleus. The sequence is that of NudC domain-containing protein 1 from Xenopus laevis (African clawed frog).